A 256-amino-acid polypeptide reads, in one-letter code: Cysteine-rich repeat secretory protein 42 (256 aa).

The first 26 residues, 1-26, serve as a signal peptide directing secretion; sequence MSSVFGSVHILAMIAIQLLLTHSVSS. 2 consecutive Gnk2-homologous domains span residues 33 to 136 and 142 to 253; these read YLHH…SVAS and YEND…LYPF.

It belongs to the cysteine-rich repeat secretory protein family.

It is found in the secreted. The polypeptide is Cysteine-rich repeat secretory protein 42 (CRRSP42) (Arabidopsis thaliana (Mouse-ear cress)).